The following is a 193-amino-acid chain: Ribosomal RNA small subunit methyltransferase G (193 aa).

S-adenosyl-L-methionine is bound by residues Gly61, Leu66, 112–113, and Arg126; that span reads IE.

This sequence belongs to the methyltransferase superfamily. RNA methyltransferase RsmG family.

It localises to the cytoplasm. It catalyses the reaction guanosine(527) in 16S rRNA + S-adenosyl-L-methionine = N(7)-methylguanosine(527) in 16S rRNA + S-adenosyl-L-homocysteine. In terms of biological role, specifically methylates the N7 position of guanine in position 527 of 16S rRNA. The chain is Ribosomal RNA small subunit methyltransferase G from Paracoccus denitrificans (strain Pd 1222).